A 227-amino-acid chain; its full sequence is Guanylate kinase (227 aa).

The region spanning 21–199 (GNLFMVVAPS…ALAELECIVA (179 aa)) is the Guanylate kinase-like domain. 28–35 (APSGAGKS) contacts ATP.

It belongs to the guanylate kinase family.

It is found in the cytoplasm. It carries out the reaction GMP + ATP = GDP + ADP. Essential for recycling GMP and indirectly, cGMP. The polypeptide is Guanylate kinase (Burkholderia thailandensis (strain ATCC 700388 / DSM 13276 / CCUG 48851 / CIP 106301 / E264)).